The chain runs to 757 residues: Palmitoyltransferase AKR1 (757 aa).

Polar residues-rich tracts occupy residues 1 to 20 and 36 to 46; these read MSDINTESGESTSLPNSTDP and ESISSLQPIVS. Positions 1–54 are disordered; that stretch reads MSDINTESGESTSLPNSTDPPLSDVNIDVEDDDTAESISSLQPIVSNTTNPPEE. Topologically, residues 1 to 307 are cytoplasmic; sequence MSDINTESGE…KLFKKSDHAK (307 aa). ANK repeat units lie at residues 58–88, 92–121, 126–155, 159–188, 197–226, and 230–259; these read PVLGQYHQACQKGDLATVKQLLDSGVLDLNT, GDITGLHWASINNRLSVVKYLISQGIDVNA, LEATPLHWAARYGYVHIVDCLLNKGADPTM, QGFNLLHLAVNSSNVMLVAYVLFFVVAKGI, KGRTPLLWAAYQGDSLSVMLLLKFGASTKI, and GGFTPLHWATVKGQPYVLTHLIRDGADFFL. A helical transmembrane segment spans residues 308-328; sequence VITFFVPLVALSIIFILFTHL. Residues 329–331 are Lumenal-facing; sequence HPL. The helical transmembrane segment at 332-352 threads the bilayer; the sequence is FALLISLIFGLAVNKALKELI. Over 353–375 the chain is Cytoplasmic; it reads LPSYSNYGLHSTSLLKSPFLSGT. A helical transmembrane segment spans residues 376 to 396; the sequence is FFGSLLLLTIVWIFKIAPFTI. Over 397-402 the chain is Lumenal; it reads FKSRLL. The helical transmembrane segment at 403-423 threads the bilayer; the sequence is TNFFMFLILMQIYYLFIKLIF. At 424-498 the chain is on the cytoplasmic side; that stretch reads SDPGCVPIET…YNDIGLKNHK (75 aa). The DHHC domain maps to 455 to 505; the sequence is NFCLETWIRKPLRSHFSTLNTHNVARFDHFCPWIYNDIGLKNHKNFMWFIL. The S-palmitoyl cysteine intermediate role is filled by Cys485. Residues 499 to 519 traverse the membrane as a helical segment; the sequence is NFMWFILLTEVGIWFFISLTM. Residues 520–550 lie on the Lumenal side of the membrane; sequence KYFDILEDTNEDVACFLLGDDELCAGFVYDR. The helical transmembrane segment at 551-571 threads the bilayer; sequence FTFLIALWALIQSVWVGFLIV. The Cytoplasmic portion of the chain corresponds to 572–757; that stretch reads VQVFQTFTGV…YPEPTGPESV (186 aa). Residues 614–647 are disordered; the sequence is ELRNDDDDTAASRTGNNPNHSNGTTIPSEGSRIN. The span at 624–646 shows a compositional bias: polar residues; it reads ASRTGNNPNHSNGTTIPSEGSRI.

Belongs to the DHHC palmitoyltransferase family. AKR/ZDHHC17 subfamily.

It localises to the early endosome membrane. Its subcellular location is the golgi apparatus membrane. It catalyses the reaction L-cysteinyl-[protein] + hexadecanoyl-CoA = S-hexadecanoyl-L-cysteinyl-[protein] + CoA. Palmitoyltransferase specific for casein kinase 1. This chain is Palmitoyltransferase AKR1 (AKR1), found in Naumovozyma castellii (Yeast).